The chain runs to 398 residues: Succinate--CoA ligase [ADP-forming] subunit beta (398 aa).

The 246-residue stretch at 9-254 folds into the ATP-grasp domain; sequence KRLLHEYGAP…LSEEDPKEIE (246 aa). Residues Lys46, 53-55, Glu109, Ala112, and Glu117 contribute to the ATP site; that span reads GRG. Mg(2+) is bound by residues Asn209 and Asp223. Residues Asn274 and 331–333 contribute to the substrate site; that span reads GIM.

Belongs to the succinate/malate CoA ligase beta subunit family. In terms of assembly, heterotetramer of two alpha and two beta subunits. It depends on Mg(2+) as a cofactor.

It carries out the reaction succinate + ATP + CoA = succinyl-CoA + ADP + phosphate. The enzyme catalyses GTP + succinate + CoA = succinyl-CoA + GDP + phosphate. The protein operates within carbohydrate metabolism; tricarboxylic acid cycle; succinate from succinyl-CoA (ligase route): step 1/1. Succinyl-CoA synthetase functions in the citric acid cycle (TCA), coupling the hydrolysis of succinyl-CoA to the synthesis of either ATP or GTP and thus represents the only step of substrate-level phosphorylation in the TCA. The beta subunit provides nucleotide specificity of the enzyme and binds the substrate succinate, while the binding sites for coenzyme A and phosphate are found in the alpha subunit. The protein is Succinate--CoA ligase [ADP-forming] subunit beta of Bartonella tribocorum (strain CIP 105476 / IBS 506).